We begin with the raw amino-acid sequence, 660 residues long: Cysteine-rich receptor-like protein kinase 22 (660 aa).

The N-terminal stretch at 1–24 (MKQRSFLSILCFILLAFGVASVSA) is a signal peptide. 2 consecutive Gnk2-homologous domains span residues 25-128 (QTCI…NISF) and 137-250 (IEPQ…LFTF). Residues 25 to 294 (QTCIENRKYF…DSRGVSAGIV (270 aa)) lie on the Extracellular side of the membrane. N-linked (GlcNAc...) asparagine glycosylation is found at Asn37, Asn53, Asn105, Asn125, Asn191, Asn230, and Asn256. Positions 264 to 273 (KPPMNVPRPP) are enriched in pro residues. Residues 264–283 (KPPMNVPRPPSVGHGANTTD) are disordered. 2 N-linked (GlcNAc...) asparagine glycosylation sites follow: Asn280 and Asn284. A helical transmembrane segment spans residues 295-315 (VVITVPAVVIVLILVVLGFFI). Over 316–660 (CWRRKSLQRT…DPLSEGLESG (345 aa)) the chain is Cytoplasmic. The Protein kinase domain occupies 353-632 (FSKSNKLGEG…IVSMLTSNTI (280 aa)). ATP is bound by residues 359–367 (LGEGRFGEV) and Lys381. A Phosphotyrosine modification is found at Tyr426. The Proton acceptor role is filled by Asp478. Ser482 bears the Phosphoserine mark. At Thr518 the chain carries Phosphothreonine. Tyr526 is modified (phosphotyrosine).

The protein belongs to the protein kinase superfamily. Ser/Thr protein kinase family. CRK subfamily.

Its subcellular location is the membrane. The enzyme catalyses L-seryl-[protein] + ATP = O-phospho-L-seryl-[protein] + ADP + H(+). It carries out the reaction L-threonyl-[protein] + ATP = O-phospho-L-threonyl-[protein] + ADP + H(+). The chain is Cysteine-rich receptor-like protein kinase 22 (CRK22) from Arabidopsis thaliana (Mouse-ear cress).